The chain runs to 221 residues: Ras-related protein RabS (221 aa).

16–23 contacts GTP; sequence GDNQCGKS. Positions 38-47 match the Effector region motif; the sequence is GIQLWHGIEI. GTP is bound by residues 71–75 and 137–140; these read DGNGG and NKCD. Position 218 is a cysteine methyl ester (Cys218). The S-geranylgeranyl cysteine moiety is linked to residue Cys218. The propeptide at 219–221 is removed in mature form; sequence IIN.

Belongs to the small GTPase superfamily. Rab family.

It localises to the cell membrane. The protein is Ras-related protein RabS (rabS) of Dictyostelium discoideum (Social amoeba).